The following is a 162-amino-acid chain: Photosystem II extrinsic protein V (162 aa).

Positions 1–26 (MLKRYMLLAVATVFFAFQVLTSTATA) are cleaved as a signal peptide. Residues C62, C65, H66, and H117 each contribute to the heme c site.

Belongs to the cytochrome c family. PsbV subfamily. In terms of assembly, PSII is composed of 1 copy each of membrane proteins PsbA, PsbB, PsbC, PsbD, PsbE, PsbF, PsbH, PsbI, PsbJ, PsbK, PsbL, PsbM, PsbT, PsbX, PsbY, PsbZ, Psb30/Ycf12, peripheral proteins PsbO, CyanoQ (PsbQ), PsbU, PsbV and a large number of cofactors. It forms dimeric complexes. The cofactor is heme c.

The protein localises to the cellular thylakoid membrane. One of the extrinsic, lumenal subunits of photosystem II (PSII). PSII is a light-driven water plastoquinone oxidoreductase, using light energy to abstract electrons from H(2)O, generating a proton gradient subsequently used for ATP formation. The extrinsic proteins stabilize the structure of photosystem II oxygen-evolving complex (OEC), the ion environment of oxygen evolution and protect the OEC against heat-induced inactivation. Low-potential cytochrome c that plays a role in the OEC of PSII. This is Photosystem II extrinsic protein V from Acaryochloris marina (strain MBIC 11017).